A 527-amino-acid polypeptide reads, in one-letter code: Glutamate--cysteine ligase (527 aa).

It belongs to the glutamate--cysteine ligase type 1 family. Type 1 subfamily.

It catalyses the reaction L-cysteine + L-glutamate + ATP = gamma-L-glutamyl-L-cysteine + ADP + phosphate + H(+). It participates in sulfur metabolism; glutathione biosynthesis; glutathione from L-cysteine and L-glutamate: step 1/2. This Bordetella bronchiseptica (strain ATCC BAA-588 / NCTC 13252 / RB50) (Alcaligenes bronchisepticus) protein is Glutamate--cysteine ligase.